The primary structure comprises 152 residues: Aspartate carbamoyltransferase regulatory chain (152 aa).

Cys-108, Cys-113, Cys-137, and Cys-140 together coordinate Zn(2+).

Belongs to the PyrI family. In terms of assembly, contains catalytic and regulatory chains. Requires Zn(2+) as cofactor.

Its function is as follows. Involved in allosteric regulation of aspartate carbamoyltransferase. In Neisseria meningitidis serogroup A / serotype 4A (strain DSM 15465 / Z2491), this protein is Aspartate carbamoyltransferase regulatory chain.